The chain runs to 654 residues: Chaperone protein DnaK (654 aa).

Thr205 carries the post-translational modification Phosphothreonine; by autocatalysis. Residues 592–654 form a disordered region; it reads ELERQMQQIG…EVEILDDKKP (63 aa). Positions 608 to 621 are enriched in polar residues; it reads AGQSETQSTGPGSY. Residues 622-636 are compositionally biased toward low complexity; the sequence is QESSNQSSQHQTNNN.

Belongs to the heat shock protein 70 family.

Acts as a chaperone. The polypeptide is Chaperone protein DnaK (Protochlamydia amoebophila (strain UWE25)).